We begin with the raw amino-acid sequence, 178 residues long: CDP-archaeol synthase (178 aa).

A run of 4 helical transmembrane segments spans residues 3–23, 56–76, 91–111, and 136–156; these read LLLL…ANAV, FFGI…VILY, IILS…GSFI, and LLFA…LLVI.

The protein belongs to the CDP-archaeol synthase family. Requires Mg(2+) as cofactor.

The protein localises to the cell membrane. The enzyme catalyses 2,3-bis-O-(geranylgeranyl)-sn-glycerol 1-phosphate + CTP + H(+) = CDP-2,3-bis-O-(geranylgeranyl)-sn-glycerol + diphosphate. It participates in membrane lipid metabolism; glycerophospholipid metabolism. Catalyzes the formation of CDP-2,3-bis-(O-geranylgeranyl)-sn-glycerol (CDP-archaeol) from 2,3-bis-(O-geranylgeranyl)-sn-glycerol 1-phosphate (DGGGP) and CTP. This reaction is the third ether-bond-formation step in the biosynthesis of archaeal membrane lipids. This is CDP-archaeol synthase from Methanococcus maripaludis (strain C5 / ATCC BAA-1333).